Here is a 151-residue protein sequence, read N- to C-terminus: MMAEEHTDLEAQIVKDIHFKEIDLVNRDPKNINEDIVKVDFEDVIAEPVGTYSFDGVWKVSYTTFTVSKYWCYRLLSTLLGVPLALLWGFLFACISFCHIWAVVPCIKSYLIEIQCISHIYSLCIRTFCNPLFAALGQVCSNIKVMLRKEV.

Over 1–83 the chain is Cytoplasmic; the sequence is MMAEEHTDLE…RLLSTLLGVP (83 aa). A Glycyl lysine isopeptide (Lys-Gly) (interchain with G-Cter in SUMO3) cross-link involves residue lysine 38. The segment at 64–114 is required for interaction with DAG1; it reads TFTVSKYWCYRLLSTLLGVPLALLWGFLFACISFCHIWAVVPCIKSYLIEI. An intramembrane region (helical) is located at residues 84–104; it reads LALLWGFLFACISFCHIWAVV. Residues 105-151 lie on the Cytoplasmic side of the membrane; sequence PCIKSYLIEIQCISHIYSLCIRTFCNPLFAALGQVCSNIKVMLRKEV.

It belongs to the caveolin family. Homooligomer. Interacts with DYSF. Interacts with DLG1 and KCNA5; forms a ternary complex. Interacts with DAG1 (via its C-terminal); the interaction prevents binding of DAG1 with DMD. Interacts with TRIM72. Interacts with MUSK; may regulate MUSK signaling. Interacts with POPDC1. Interacts with CAVIN1, CAVIN2 and CAVIN4. Sumoylation with SUMO3 by PIAS4 may reduce agonist-induced internalization and desensitization of adrenergic receptor ABRD2.

Its subcellular location is the golgi apparatus membrane. It is found in the cell membrane. The protein resides in the membrane. It localises to the caveola. The protein localises to the sarcolemma. May act as a scaffolding protein within caveolar membranes. Interacts directly with G-protein alpha subunits and can functionally regulate their activity. May also regulate voltage-gated potassium channels. Plays a role in the sarcolemma repair mechanism of both skeletal muscle and cardiomyocytes that permits rapid resealing of membranes disrupted by mechanical stress. Mediates the recruitment of CAVIN2 and CAVIN3 proteins to the caveolae. This is Caveolin-3 (CAV3) from Bos taurus (Bovine).